A 360-amino-acid chain; its full sequence is Photosystem II protein D1 (360 aa).

The next 3 helical transmembrane spans lie at 29-46 (YIGW…TATS), 118-133 (HFFI…EWEL), and 142-156 (WIAV…AATA). H118 is a chlorophyll a binding site. Pheophytin a is bound at residue Y126. [CaMn4O5] cluster contacts are provided by D170 and E189. Residues 197–218 (FHMMGVAGVFGGSLFSAMHGSL) form a helical membrane-spanning segment. H198 lines the chlorophyll a pocket. Residues H215 and 264-265 (SF) contribute to the a quinone site. H215 contacts Fe cation. H272 lines the Fe cation pocket. The chain crosses the membrane as a helical span at residues 274-288 (FLALWPVVCICVTAL). [CaMn4O5] cluster-binding residues include H332, E333, D342, and A344. Residues 345 to 360 (SEVSLPVALNKVEING) constitute a propeptide that is removed on maturation.

The protein belongs to the reaction center PufL/M/PsbA/D family. PSII is composed of 1 copy each of membrane proteins PsbA, PsbB, PsbC, PsbD, PsbE, PsbF, PsbH, PsbI, PsbJ, PsbK, PsbL, PsbM, PsbT, PsbY, PsbZ, Psb30/Ycf12, at least 3 peripheral proteins of the oxygen-evolving complex and a large number of cofactors. It forms dimeric complexes. It depends on The D1/D2 heterodimer binds P680, chlorophylls that are the primary electron donor of PSII, and subsequent electron acceptors. It shares a non-heme iron and each subunit binds pheophytin, quinone, additional chlorophylls, carotenoids and lipids. D1 provides most of the ligands for the Mn4-Ca-O5 cluster of the oxygen-evolving complex (OEC). There is also a Cl(-1) ion associated with D1 and D2, which is required for oxygen evolution. The PSII complex binds additional chlorophylls, carotenoids and specific lipids. as a cofactor. Post-translationally, tyr-161 forms a radical intermediate that is referred to as redox-active TyrZ, YZ or Y-Z. C-terminally processed by CTPA; processing is essential to allow assembly of the oxygen-evolving complex and thus photosynthetic growth.

Its subcellular location is the plastid. The protein localises to the chloroplast thylakoid membrane. It carries out the reaction 2 a plastoquinone + 4 hnu + 2 H2O = 2 a plastoquinol + O2. Its function is as follows. Photosystem II (PSII) is a light-driven water:plastoquinone oxidoreductase that uses light energy to abstract electrons from H(2)O, generating O(2) and a proton gradient subsequently used for ATP formation. It consists of a core antenna complex that captures photons, and an electron transfer chain that converts photonic excitation into a charge separation. The D1/D2 (PsbA/PsbD) reaction center heterodimer binds P680, the primary electron donor of PSII as well as several subsequent electron acceptors. The protein is Photosystem II protein D1 of Galdieria sulphuraria (Red alga).